A 392-amino-acid chain; its full sequence is 23S rRNA (uracil(747)-C(5))-methyltransferase RlmC (392 aa).

Positions 4, 12, 15, and 93 each coordinate [4Fe-4S] cluster. The S-adenosyl-L-methionine site is built by Gln-218, Phe-247, Glu-275, and Asn-321. Cys-348 (nucleophile) is an active-site residue.

It belongs to the class I-like SAM-binding methyltransferase superfamily. RNA M5U methyltransferase family. RlmC subfamily.

The catalysed reaction is uridine(747) in 23S rRNA + S-adenosyl-L-methionine = 5-methyluridine(747) in 23S rRNA + S-adenosyl-L-homocysteine + H(+). In terms of biological role, catalyzes the formation of 5-methyl-uridine at position 747 (m5U747) in 23S rRNA. This chain is 23S rRNA (uracil(747)-C(5))-methyltransferase RlmC, found in Haemophilus influenzae (strain PittGG).